The primary structure comprises 340 residues: MALSLGLGLALSALVIGIRPQVVVPFGLSALGSALLGSLLIPGLRRWKAGQVIRQEGPQSHQKKAGTPTMGGISFLPVGLLVAGIWSGWDPHWLAVALLTLAYSFVGWLDDWLVIRQQSNKGLSPQHKLLLQVGVALGFCVYLAWQGIPTSLTLPGIGTLSLGWLFWPLALFVLVGTNNAVNLTDGMDGLAAGVVAILLIGLGLLHRDPELSVLAFTLSGACLGFLVHNHHRARLFMGDTGSLGLGGALAGLALLGDQLWALALMGGVLVAEALSVMLQVGYFQYTKRKTGTGQRLLRMSPLHHHLELGGWSEVQVVGSFYGVTALLVGLGWAWWHWTGM.

9 helical membrane-spanning segments follow: residues 22–42, 69–89, 95–115, 129–149, 156–176, 186–206, 209–229, 235–257, and 316–336; these read VVVPFGLSALGSALLGSLLIP, TMGGISFLPVGLLVAGIWSGW, AVALLTLAYSFVGWLDDWLVI, LLLQVGVALGFCVYLAWQGIP, GIGTLSLGWLFWPLALFVLVG, GMDGLAAGVVAILLIGLGLLH, PELSVLAFTLSGACLGFLVHN, LFMGDTGSLGLGGALAGLALLGD, and VVGSFYGVTALLVGLGWAWWH.

This sequence belongs to the glycosyltransferase 4 family. MraY subfamily. It depends on Mg(2+) as a cofactor.

It localises to the cell inner membrane. The catalysed reaction is UDP-N-acetyl-alpha-D-muramoyl-L-alanyl-gamma-D-glutamyl-meso-2,6-diaminopimeloyl-D-alanyl-D-alanine + di-trans,octa-cis-undecaprenyl phosphate = di-trans,octa-cis-undecaprenyl diphospho-N-acetyl-alpha-D-muramoyl-L-alanyl-D-glutamyl-meso-2,6-diaminopimeloyl-D-alanyl-D-alanine + UMP. Its pathway is cell wall biogenesis; peptidoglycan biosynthesis. Catalyzes the initial step of the lipid cycle reactions in the biosynthesis of the cell wall peptidoglycan: transfers peptidoglycan precursor phospho-MurNAc-pentapeptide from UDP-MurNAc-pentapeptide onto the lipid carrier undecaprenyl phosphate, yielding undecaprenyl-pyrophosphoryl-MurNAc-pentapeptide, known as lipid I. The sequence is that of Phospho-N-acetylmuramoyl-pentapeptide-transferase from Synechococcus sp. (strain JA-2-3B'a(2-13)) (Cyanobacteria bacterium Yellowstone B-Prime).